Here is a 462-residue protein sequence, read N- to C-terminus: UDP-N-acetylmuramate--L-alanine ligase (462 aa).

Residue 116–122 (GAHGKTT) coordinates ATP.

This sequence belongs to the MurCDEF family.

It is found in the cytoplasm. It carries out the reaction UDP-N-acetyl-alpha-D-muramate + L-alanine + ATP = UDP-N-acetyl-alpha-D-muramoyl-L-alanine + ADP + phosphate + H(+). The protein operates within cell wall biogenesis; peptidoglycan biosynthesis. In terms of biological role, cell wall formation. This Desulforamulus reducens (strain ATCC BAA-1160 / DSM 100696 / MI-1) (Desulfotomaculum reducens) protein is UDP-N-acetylmuramate--L-alanine ligase.